Consider the following 161-residue polypeptide: DNA-binding protein inhibitor ID-4 (161 aa).

Residues 52–104 (AAEAAADEPALCLQCDMNDCYSRLRRLVPTIPPNKKVSKVEILPHVIDYILDL) enclose the bHLH domain. The segment at 116 to 161 (RQPPPPAPPHHPAGTCPAAPPRTPLTALNTDPAGAVNKQGDSILCR) is disordered. Residues 117–126 (QPPPPAPPHH) show a composition bias toward pro residues.

Heterodimer with other HLH proteins.

The protein localises to the nucleus. Functionally, transcriptional regulator (lacking a basic DNA binding domain) which negatively regulates the basic helix-loop-helix (bHLH) transcription factors by forming heterodimers and inhibiting their DNA binding and transcriptional activity. Implicated in regulating a variety of cellular processes, including cellular growth, senescence, differentiation, apoptosis, angiogenesis, and neoplastic transformation. The chain is DNA-binding protein inhibitor ID-4 (ID4) from Sus scrofa (Pig).